Here is a 672-residue protein sequence, read N- to C-terminus: Negative growth regulatory protein NGR1 (672 aa).

M1 carries the N-acetylmethionine modification. Polar residues-rich tracts occupy residues 1–13 (MMSNVANASQRQE) and 23–32 (SSTVETSTEP). 2 disordered regions span residues 1-40 (MMSNVANASQRQENPYIIPLPPSSTVETSTEPPRTLWMGD) and 77-102 (SSTSSSNNNTSEENAENQQSASNSTD). M2 carries the post-translational modification N-acetylserine. RRM domains are found at residues 36–159 (LWMG…YSPT), 192–271 (FSLF…YATP), and 360–432 (TTVF…WGRP). Low complexity predominate over residues 77–96 (SSTSSSNNNTSEENAENQQS). S524 is subject to Phosphoserine. The tract at residues 640 to 672 (LNIAPNSNNSKSSIMNKHPNRNNVPPIHPSLLH) is disordered. Residues 645–656 (NSNNSKSSIMNK) are compositionally biased toward low complexity.

Functionally, may be an RNA-binding protein involved in control of an RNA processing pathway that influences the regulation of cell growth in early log phase. Can bind to RNA and single-stranded DNA but not double-stranded DNA. The chain is Negative growth regulatory protein NGR1 (NGR1) from Saccharomyces cerevisiae (strain ATCC 204508 / S288c) (Baker's yeast).